A 393-amino-acid chain; its full sequence is uncharacterized protein (393 aa).

The segment at 345-393 (PNKWATDDAARREMERTRKARYRAKNRAVADPEDSPPGKRLRRGPKSST) is disordered. Residues 349 to 361 (ATDDAARREMERT) show a composition bias toward basic and acidic residues. Positions 383–393 (KRLRRGPKSST) are enriched in basic residues.

This is an uncharacterized protein from Ictalurid herpesvirus 1 (strain Auburn) (IcHV-1).